Consider the following 218-residue polypeptide: 1-Cys peroxiredoxin (218 aa).

The Thioredoxin domain maps to 4–164 (LTIGDTIPDL…VLRVVESLQK (161 aa)). The active-site Cysteine sulfenic acid (-SOH) intermediate is the Cys46. The Bipartite nuclear localization signal signature appears at 194–217 (KEMFPQGFKTADLPSKKEYLRFTN).

The protein belongs to the peroxiredoxin family. Prx6 subfamily.

The protein resides in the nucleus. It is found in the cytoplasm. It catalyses the reaction a hydroperoxide + [thioredoxin]-dithiol = an alcohol + [thioredoxin]-disulfide + H2O. Its function is as follows. Thiol-specific peroxidase that catalyzes the reduction of hydrogen peroxide and organic hydroperoxides to water and alcohols, respectively. Seems to contribute to the inhibition of germination during stress. The polypeptide is 1-Cys peroxiredoxin (Medicago truncatula (Barrel medic)).